Consider the following 94-residue polypeptide: UPF0381 protein YfcZ (94 aa).

This sequence belongs to the UPF0381 family.

The polypeptide is UPF0381 protein YfcZ (yfcZ) (Escherichia coli O6:H1 (strain CFT073 / ATCC 700928 / UPEC)).